The sequence spans 189 residues: Glycerol-3-phosphate acyltransferase (189 aa).

5 consecutive transmembrane segments (helical) span residues 1-21 (MFWL…AIVL), 50-70 (KLAI…VLLA), 77-97 (LHAQ…PLYF), 111-131 (MLMG…LLTF), and 151-171 (LLAW…VMIV).

Belongs to the PlsY family. As to quaternary structure, probably interacts with PlsX.

It localises to the cell inner membrane. The enzyme catalyses an acyl phosphate + sn-glycerol 3-phosphate = a 1-acyl-sn-glycero-3-phosphate + phosphate. It functions in the pathway lipid metabolism; phospholipid metabolism. Its function is as follows. Catalyzes the transfer of an acyl group from acyl-phosphate (acyl-PO(4)) to glycerol-3-phosphate (G3P) to form lysophosphatidic acid (LPA). This enzyme utilizes acyl-phosphate as fatty acyl donor, but not acyl-CoA or acyl-ACP. The chain is Glycerol-3-phosphate acyltransferase from Pseudomonas putida (strain ATCC 700007 / DSM 6899 / JCM 31910 / BCRC 17059 / LMG 24140 / F1).